A 366-amino-acid chain; its full sequence is G-protein coupled receptor 183-B (366 aa).

At 1–24 the chain is on the extracellular side; it reads MMSPDLDLNFSSNCNLYDHRPVAR. The N-linked (GlcNAc...) asparagine glycan is linked to Asn-9. The chain crosses the membrane as a helical span at residues 25 to 50; the sequence is VLIPLVYSIICPVGLLGNALALHVVI. Over 51–70 the chain is Cytoplasmic; the sequence is SSTTKINSITLYSANLAVSD. The chain crosses the membrane as a helical span at residues 71-88; sequence ILFCLSLPLRAVYYGLGF. The Extracellular segment spans residues 89–98; that stretch reads HWPMGEVLCK. A disulfide bond links Cys-97 and Cys-175. Residues 99 to 120 form a helical membrane-spanning segment; it reads AIALLFYLNCYAGVNFMTCLAV. The Cytoplasmic segment spans residues 121 to 142; sequence DRFVALVFPARLAKLRKAKNVR. Residues 143-161 form a helical membrane-spanning segment; it reads FVCLAIWLLVLAQTLPLLT. Residues 162–187 lie on the Extracellular side of the membrane; that stretch reads IGLTKTEPDSSITCMEYPNFEGVFKG. Residues 188 to 210 traverse the membrane as a helical segment; it reads LPYMLIVAVVLGFGIPVMTIIAC. Over 211 to 236 the chain is Cytoplasmic; sequence YSILTHKLHQAAKSNQLTERSGKTKK. A helical membrane pass occupies residues 237-260; that stretch reads ARGVIAGVVFVFVVCFSPYHIDIL. The Extracellular segment spans residues 261 to 280; sequence QYMIRKLLYETDCKELQSFQ. Residues 281 to 305 traverse the membrane as a helical segment; it reads ISLHITVCLMNLNSCLDPFVYFFAC. Over 306–366 the chain is Cytoplasmic; sequence KGYKQKVMRM…QQICYQPSAT (61 aa).

The protein belongs to the G-protein coupled receptor 1 family.

It localises to the cell membrane. In terms of biological role, probable receptor for oxysterols that plays a central role during humoral immunity. Promotes activated B-cell localization in the outer follicle and interfollicular regions. The sequence is that of G-protein coupled receptor 183-B (gpr183b) from Danio rerio (Zebrafish).